We begin with the raw amino-acid sequence, 445 residues long: Histone acetyltransferase of the MYST family 1 (445 aa).

The Tudor-knot domain maps to 60–118; the sequence is LEVGTRVMCQWRDGKYHPVKVIERRKNYNGGHNDYEYYVHYTEFNRRLDEWIKLEQLDL. The region spanning 169-440 is the MYST-type HAT domain; the sequence is TKVKNIATIE…VDVSKMIWTP (272 aa). The segment at 202–227 adopts a C2HC MYST-type zinc-finger fold; that stretch reads LFFCEFCLSFMKRKEQLQRHMRKCDL. Lys-269 is modified (N6-acetyllysine; by autocatalysis). Residues 312–314 and 319–325 each bind acetyl-CoA; these read ILT and QRKGYGK. The Proton donor/acceptor role is filled by Glu-345. Ser-349 serves as a coordination point for acetyl-CoA.

The protein belongs to the MYST (SAS/MOZ) family. Interacts with MRG1 and MRG2. Component of the NuA4 histone acetyltransferase complex. Autoacetylation at Lys-269 is required for proper function. Expressed in cotyledons, leaves, stems, roots and, at higher levels in developing flowers, particularly in the anthers and gynoecia. Constitutively expressed in all tissues, predominantly in shoot apical meristem.

It is found in the nucleus. The enzyme catalyses L-lysyl-[protein] + acetyl-CoA = N(6)-acetyl-L-lysyl-[protein] + CoA + H(+). In terms of biological role, histone acetyltransferase which may be involved in transcriptional activation. Acetylates 'Lys-5' of histone H4 (H4K5ac). Essential for gametophyte development. Involved in DNA repair after UV-B exposure. Negative regulator of flowering controlling the H4K5ac levels in the FLC chromatin. The polypeptide is Histone acetyltransferase of the MYST family 1 (Arabidopsis thaliana (Mouse-ear cress)).